Consider the following 551-residue polypeptide: DEAD-box ATP-dependent RNA helicase 47, mitochondrial (551 aa).

A mitochondrion-targeting transit peptide spans 1–29 (MAASTSTRFLVLLKDFSAFRKISWTCAAT). The short motif at 110–138 (KSFEELGLPDSLLDSLEREGFSVPTDVQS) is the Q motif element. Residues 141–340 (VPAIIKGHDA…KSWSHEPVLV (200 aa)) form the Helicase ATP-binding domain. An ATP-binding site is contributed by 154 to 161 (SYTGSGKT). The DEAD box signature appears at 274–277 (DEVD). In terms of domain architecture, Helicase C-terminal spans 397–548 (TLRRCVHALD…ELVVTEEDKA (152 aa)).

The protein belongs to the DEAD box helicase family. In terms of tissue distribution, mostly expressed in leaves and flowers, and, to a lower extent, in roots, seedlings and siliques, especially in meristematic regions.

The protein localises to the mitochondrion. It carries out the reaction ATP + H2O = ADP + phosphate + H(+). Functionally, essential protein required during embryogenesis. Required for mitochondrial metabolism. Necessary for normal plasmodesmata (PD) development and aperture regulation. The polypeptide is DEAD-box ATP-dependent RNA helicase 47, mitochondrial (RH47) (Arabidopsis thaliana (Mouse-ear cress)).